The following is a 122-amino-acid chain: UPF0102 protein BQ09720 (122 aa).

The protein belongs to the UPF0102 family.

The protein is UPF0102 protein BQ09720 of Bartonella quintana (strain Toulouse) (Rochalimaea quintana).